The chain runs to 284 residues: Chaperone protein dnaJ 6 (284 aa).

Disordered regions lie at residues 1–30 (MGRK…ETSL), 196–221 (NKIS…AKDS), and 252–284 (GGDA…SRGK). Residues 3–6 (RKKK) carry the Nuclear localization signal motif. The region spanning 29 to 94 (SLYEVLGVER…EKRAVYDQTG (66 aa)) is the J domain. Positions 209–215 (RKRKKKK) match the Nuclear localization signal motif. Over residues 255-265 (AEAEPTEEEFE) the composition is skewed to acidic residues. A compositionally biased stretch (basic and acidic residues) spans 266 to 275 (AAQRRIESKR).

This sequence belongs to the DnaJ family. C/III subfamily. As to expression, highly expressed in leaves, flowers and siliques, and to lower extent in roots.

The protein localises to the nucleus. In terms of biological role, plays a continuous role in plant development probably in the structural organization of compartments. The chain is Chaperone protein dnaJ 6 (ATJ6) from Arabidopsis thaliana (Mouse-ear cress).